The primary structure comprises 466 residues: A-type ATP synthase subunit B 2 (466 aa).

Belongs to the ATPase alpha/beta chains family. As to quaternary structure, has multiple subunits with at least A(3), B(3), C, D, E, F, H, I and proteolipid K(x).

It localises to the cell membrane. Functionally, component of the A-type ATP synthase that produces ATP from ADP in the presence of a proton gradient across the membrane. The B chain is a regulatory subunit. The sequence is that of A-type ATP synthase subunit B 2 from Methanospirillum hungatei JF-1 (strain ATCC 27890 / DSM 864 / NBRC 100397 / JF-1).